Consider the following 469-residue polypeptide: 3-isopropylmalate dehydratase large subunit (469 aa).

Residues cysteine 349, cysteine 409, and cysteine 412 each coordinate [4Fe-4S] cluster. Residues 424 to 443 (QISASSSNRNFKGRQGSPSG) form a disordered region.

It belongs to the aconitase/IPM isomerase family. LeuC type 1 subfamily. As to quaternary structure, heterodimer of LeuC and LeuD. [4Fe-4S] cluster is required as a cofactor.

It catalyses the reaction (2R,3S)-3-isopropylmalate = (2S)-2-isopropylmalate. Its pathway is amino-acid biosynthesis; L-leucine biosynthesis; L-leucine from 3-methyl-2-oxobutanoate: step 2/4. Functionally, catalyzes the isomerization between 2-isopropylmalate and 3-isopropylmalate, via the formation of 2-isopropylmaleate. This chain is 3-isopropylmalate dehydratase large subunit, found in Thermosynechococcus vestitus (strain NIES-2133 / IAM M-273 / BP-1).